The following is an 819-amino-acid chain: Plastid division protein CDP1, chloroplastic (819 aa).

The transit peptide at Met-1–Val-76 directs the protein to the chloroplast. The Stromal segment spans residues Asp-77–Gln-572. The stretch at Glu-419 to Asn-439 forms a coiled coil. Residues Ser-573–Leu-593 traverse the membrane as a helical segment. Residues Lys-594 to Lys-819 are Chloroplast intermembrane-facing. Residues Ile-762 to Glu-782 are a coiled coil.

In terms of assembly, self-interacts. Interacts (via N-terminus) with ARC3 (via MORN domains). Binds (via N-terminus) to FTSZ2 proteins, FTSZ2-1 and FTSZ2-2. Recruited ARC3 to the middle of the plastid where subsequent complex made of CDP1/PARC6, ARC3 and FtsZ proteins can form; this complex enhances the dynamics of Z rings during chloroplast division. Interacts (via C-terminus) with PDV1 (via C-terminus). Interacts with MIND1. Exclusively expressed in young green tissues such as young cotyledons, shoot apex, emerging leaves and budding inflorescence.

The protein resides in the plastid. It localises to the chloroplast inner membrane. In terms of biological role, component of the plastid division machinery required for PDV1 localization to constriction sites. Involved in chloroplast division site placement. Required for the proper formation of FtsZ rings at the division site in nongreen plastids (e.g. etioplasts). Inhibits FtsZ assembly, functioning as an antagonistic regulator of FtsZ dynamics against ARC6, by recruiting ARC3 to the middle of the plastid to facilitate its interaction with FtsZ proteins. Required during stromule biogenesis in the leaf epidermis, especially in non-mesophyll cells plastids. The chain is Plastid division protein CDP1, chloroplastic from Arabidopsis thaliana (Mouse-ear cress).